A 468-amino-acid chain; its full sequence is UDP-N-acetylmuramate--L-alanine ligase (468 aa).

An ATP-binding site is contributed by 112–118 (GTHGKTT).

The protein belongs to the MurCDEF family.

Its subcellular location is the cytoplasm. The catalysed reaction is UDP-N-acetyl-alpha-D-muramate + L-alanine + ATP = UDP-N-acetyl-alpha-D-muramoyl-L-alanine + ADP + phosphate + H(+). It functions in the pathway cell wall biogenesis; peptidoglycan biosynthesis. Cell wall formation. The sequence is that of UDP-N-acetylmuramate--L-alanine ligase from Bordetella petrii (strain ATCC BAA-461 / DSM 12804 / CCUG 43448).